The chain runs to 233 residues: Ribonuclease 3 (233 aa).

The region spanning 4–126 (LNKLMERLGH…IVGSIYIDAG (123 aa)) is the RNase III domain. Glutamate 39 contacts Mg(2+). The active site involves aspartate 43. Residues aspartate 112 and glutamate 115 each contribute to the Mg(2+) site. Residue glutamate 115 is part of the active site. In terms of domain architecture, DRBM spans 153-222 (DAKSLLQEWL…AKRFLELLDD (70 aa)).

It belongs to the ribonuclease III family. In terms of assembly, homodimer. Mg(2+) serves as cofactor.

The protein localises to the cytoplasm. It catalyses the reaction Endonucleolytic cleavage to 5'-phosphomonoester.. Functionally, digests double-stranded RNA. Involved in the processing of primary rRNA transcript to yield the immediate precursors to the large and small rRNAs (23S and 16S). Processes some mRNAs, and tRNAs when they are encoded in the rRNA operon. Processes pre-crRNA and tracrRNA of type II CRISPR loci if present in the organism. This Coxiella burnetii (strain CbuG_Q212) (Coxiella burnetii (strain Q212)) protein is Ribonuclease 3.